A 177-amino-acid polypeptide reads, in one-letter code: KxDL motif-containing protein 1 (177 aa).

Met-1 carries the post-translational modification N-acetylmethionine. The interval 100–177 (SHIPEGSFLE…TDDEEETHEE (78 aa)) is disordered. Over residues 125–145 (ATSEQSTGSCDTSPDTVSPSL) the composition is skewed to polar residues.

It belongs to the KXD1 family. In terms of assembly, component of the BLOC-one-related complex (BORC) which is composed of BLOC1S1, BLOC1S2, BORCS5, BORCS6, BORCS7, BORCS8, KXD1 and SNAPIN. Associates with the BLOC-1 complex. Interacts with BLOC1S1. Interacts with DTNBP1/BLOC1S7 (via coiled-coil domain). Widely expressed.

The protein localises to the lysosome membrane. Its function is as follows. As part of the BORC complex may play a role in lysosomes movement and localization at the cell periphery. Associated with the cytosolic face of lysosomes, the BORC complex may recruit ARL8B and couple lysosomes to microtubule plus-end-directed kinesin motor. May also be involved in the biogenesis of lysosome-related organelles such as melanosomes. This Mus musculus (Mouse) protein is KxDL motif-containing protein 1 (Kxd1).